Consider the following 308-residue polypeptide: Glutaminase (308 aa).

Residues serine 66, asparagine 117, glutamate 161, asparagine 168, tyrosine 192, tyrosine 244, and valine 262 each coordinate substrate.

The protein belongs to the glutaminase family. Homotetramer.

The enzyme catalyses L-glutamine + H2O = L-glutamate + NH4(+). The polypeptide is Glutaminase (Salmonella choleraesuis (strain SC-B67)).